The primary structure comprises 21 residues: Fibrinogen beta chain (21 aa).

Glutamine 1 carries the pyrrolidone carboxylic acid modification. A compositionally biased stretch (acidic residues) spans 1–11; that stretch reads QHSTDYDEEEE. A disordered region spans residues 1–21; it reads QHSTDYDEEEEDRAKLHLDAR. Threonine 4 carries O-linked (GalNAc...) threonine glycosylation. Tyrosine 6 is modified (sulfotyrosine). Basic and acidic residues predominate over residues 12-21; sequence DRAKLHLDAR.

Heterohexamer; disulfide linked. Contains 2 sets of 3 non-identical chains (alpha, beta and gamma). The 2 heterotrimers are in head to head conformation with the N-termini in a small central domain. Post-translationally, conversion of fibrinogen to fibrin is triggered by thrombin, which cleaves fibrinopeptides A and B from alpha and beta chains, and thus exposes the N-terminal polymerization sites responsible for the formation of the soft clot.

The protein localises to the secreted. Cleaved by the protease thrombin to yield monomers which, together with fibrinogen alpha (FGA) and fibrinogen gamma (FGG), polymerize to form an insoluble fibrin matrix. Fibrin has a major function in hemostasis as one of the primary components of blood clots. In addition, functions during the early stages of wound repair to stabilize the lesion and guide cell migration during re-epithelialization. Was originally thought to be essential for platelet aggregation, based on in vitro studies using anticoagulated blood. However subsequent studies have shown that it is not absolutely required for thrombus formation in vivo. Enhances expression of SELP in activated platelets. Maternal fibrinogen is essential for successful pregnancy. Fibrin deposition is also associated with infection, where it protects against IFNG-mediated hemorrhage. May also facilitate the antibacterial immune response via both innate and T-cell mediated pathways. The polypeptide is Fibrinogen beta chain (FGB) (Cervus elaphus (Red deer)).